Reading from the N-terminus, the 710-residue chain is Polyribonucleotide nucleotidyltransferase (710 aa).

Positions 501 and 507 each coordinate Mg(2+). The KH domain maps to 568-628 (PKVQMFQIKP…ETVKQAILFI (61 aa)). An S1 motif domain is found at 638–710 (NSIYHAHISR…RIDFVLISKK (73 aa)).

This sequence belongs to the polyribonucleotide nucleotidyltransferase family. The cofactor is Mg(2+).

It is found in the cytoplasm. The enzyme catalyses RNA(n+1) + phosphate = RNA(n) + a ribonucleoside 5'-diphosphate. In terms of biological role, involved in mRNA degradation. Catalyzes the phosphorolysis of single-stranded polyribonucleotides processively in the 3'- to 5'-direction. The sequence is that of Polyribonucleotide nucleotidyltransferase from Phytoplasma australiense.